Reading from the N-terminus, the 566-residue chain is Solute carrier family 2, facilitated glucose transporter member 9 (566 aa).

Residues 1-31 (MARKQNRNSKELGLAPLADDTSHAGPPGPGR) are disordered. Topologically, residues 1–51 (MARKQNRNSKELGLAPLADDTSHAGPPGPGRALLECDHLRSGLPDGRRRKD) are cytoplasmic. Serine 9 carries the phosphoserine modification. The chain crosses the membrane as a helical span at residues 52-72 (WSCSLLVASLAGAFGSSFLYG). Residues 73 to 107 (YNLSVVNAPTPYIKAFYNESWERRHGRPIDPDTLT) are Extracellular-facing. Asparagine 74 and asparagine 90 each carry an N-linked (GlcNAc...) asparagine glycan. A helical transmembrane segment spans residues 108–128 (LLWSVTVSIFAIGGLVGTLMV). At 129–140 (KMIGKVLGRKHT) the chain is on the cytoplasmic side. Residues 141 to 161 (LLANNGFAISAALLMACSLQA) traverse the membrane as a helical segment. Residues 162–171 (GAFEMLIVGR) are Extracellular-facing. A helical membrane pass occupies residues 172–192 (FIMGIDGGIALSVLPMYLSEI). At 193–200 (SPKEIRGS) the chain is on the cytoplasmic side. The helical transmembrane segment at 201–221 (LGQVTAIFICIGVFTGQLLGL) threads the bilayer. The Extracellular segment spans residues 222–231 (PELLGKESTW). Residues 232–252 (PYLFGVIVVPAVVQLLSLPFL) traverse the membrane as a helical segment. Residues 253-316 (PDSPRYLLLE…LRAPYVRWQV (64 aa)) lie on the Cytoplasmic side of the membrane. Residues 317 to 337 (VTVIVTMACYQLCGLNAIWFY) traverse the membrane as a helical segment. The Extracellular portion of the chain corresponds to 338-354 (TNSIFGKAGIPPAKIPY). Residues 355 to 375 (VTLSTGGIETLAAIFSGLVIE) form a helical membrane-spanning segment. Topologically, residues 376-381 (HLGRRP) are cytoplasmic. The helical transmembrane segment at 382 to 402 (LLIGGFGLMALFFGTLTVTLT) threads the bilayer. At 403–415 (LQDRAPWVPYLSI) the chain is on the extracellular side. A helical transmembrane segment spans residues 416–436 (VGILAIIASFCSGPGGIPFIL). Residues 437-451 (TGEFFQQSQRPAAFI) lie on the Cytoplasmic side of the membrane. A helical transmembrane segment spans residues 452–472 (IAGTVNWLSNFAVGLLFPFIQ). Residues 473 to 478 (KSLDTY) are Extracellular-facing. A helical transmembrane segment spans residues 479–499 (CFLVFATICMTGAIYLYFVLP). The Cytoplasmic segment spans residues 500–566 (ETKNRTYAEI…YMDDLTFQET (67 aa)). Serine 514 is subject to Phosphoserine. Residues 524–539 (EKIDSAVTDGKTKGRP) show a composition bias toward basic and acidic residues. The tract at residues 524-543 (EKIDSAVTDGKTKGRPEQVS) is disordered.

Belongs to the major facilitator superfamily. Sugar transporter (TC 2.A.1.1) family.

It localises to the basolateral cell membrane. It is found in the apical cell membrane. It carries out the reaction urate(out) = urate(in). In terms of biological role, high-capacity urate transporter, which may play a role in the urate reabsorption by proximal tubules. May have a residual high-affinity, low-capacity glucose and fructose transporter activity. Transports urate at rates 45- to 60-fold faster than glucose. Does not transport galactose. May mediate small uptake of adenine but not of other nucleobases. This Pongo abelii (Sumatran orangutan) protein is Solute carrier family 2, facilitated glucose transporter member 9.